The sequence spans 286 residues: NAD kinase (286 aa).

Catalysis depends on Asp68, which acts as the Proton acceptor. Residues 68 to 69, Lys73, 142 to 143, Arg153, Asp172, 183 to 188, and Gln242 each bind NAD(+); these read DG, ND, and TGYSFS.

Belongs to the NAD kinase family. The cofactor is a divalent metal cation.

It is found in the cytoplasm. It catalyses the reaction NAD(+) + ATP = ADP + NADP(+) + H(+). Its function is as follows. Involved in the regulation of the intracellular balance of NAD and NADP, and is a key enzyme in the biosynthesis of NADP. Catalyzes specifically the phosphorylation on 2'-hydroxyl of the adenosine moiety of NAD to yield NADP. The chain is NAD kinase from Natranaerobius thermophilus (strain ATCC BAA-1301 / DSM 18059 / JW/NM-WN-LF).